A 91-amino-acid chain; its full sequence is Elongation factor 1-beta (91 aa).

The protein belongs to the EF-1-beta/EF-1-delta family.

Promotes the exchange of GDP for GTP in EF-1-alpha/GDP, thus allowing the regeneration of EF-1-alpha/GTP that could then be used to form the ternary complex EF-1-alpha/GTP/AAtRNA. This chain is Elongation factor 1-beta, found in Caldivirga maquilingensis (strain ATCC 700844 / DSM 13496 / JCM 10307 / IC-167).